Here is a 1467-residue protein sequence, read N- to C-terminus: Helicase ARIP4 (1467 aa).

Disordered stretches follow at residues 1–150 (MSDE…YAAP) and 186–234 (DSSS…GGTH). Acidic residues predominate over residues 11–49 (PDLDPDVELEDAEEEEEEEEVAVEECDRDDEEDLLDDPS). Over residues 72–82 (TSTTSSQSEPS) the composition is skewed to low complexity. The segment covering 100 to 115 (KKRAQKPSHMRRNIRK) has biased composition (basic residues). Glycyl lysine isopeptide (Lys-Gly) (interchain with G-Cter in SUMO2) cross-links involve residues Lys115 and Lys127. Basic and acidic residues-rich tracts occupy residues 133–147 (ELER…RKDY) and 192–201 (EDEKSSRDEV). Lys272 participates in a covalent cross-link: Glycyl lysine isopeptide (Lys-Gly) (interchain with G-Cter in SUMO2). The region spanning 292 to 512 (RFKTSSGFGC…WCMVDFVRPD (221 aa)) is the Helicase ATP-binding domain. Position 305-312 (305-312 (HSMGLGKT)) interacts with ATP. Positions 463-466 (DEGH) match the DEAH box motif. The short motif at 551 to 555 (LHSLL) is the LXXLL motif 1 element. The interval 649–673 (GSAGTSARCPPQGTKGKGEDSTLAS) is disordered. Residues Lys665, Lys682, Lys759, Lys901, Lys1014, and Lys1018 each participate in a glycyl lysine isopeptide (Lys-Gly) (interchain with G-Cter in SUMO2) cross-link. A Helicase C-terminal domain is found at 728-896 (HLIEESVKLG…RVVDDLNPML (169 aa)). Residues 1120 to 1171 (RATGKPKVPEDGRMAASGSQGPSCESTSNGRHSASSPKAPDPEGLARPVSPD) form a disordered region. Residues 1136–1155 (SGSQGPSCESTSNGRHSASS) show a composition bias toward polar residues. 2 positions are modified to phosphoserine: Ser1169 and Ser1172. Disordered regions lie at residues 1184–1221 (DVAA…TALG) and 1247–1284 (PVLD…VQPY). Thr1260 is subject to Phosphothreonine. Positions 1329-1333 (LSNLL) match the LXXLL motif 2 motif. A disordered region spans residues 1445 to 1467 (AEVGFSSNDDEDKDDDVIEVTGK). The segment covering 1452-1467 (NDDEDKDDDVIEVTGK) has biased composition (acidic residues).

It belongs to the SNF2/RAD54 helicase family. In terms of assembly, interacts with AR via its N-terminus. Interacts with DYRK1A. Binds DNA and mononucleosomes, but does not seem to form large multiprotein complexes. In terms of processing, sumoylated.

The protein localises to the nucleus. It carries out the reaction ATP + H2O = ADP + phosphate + H(+). Enzyme activity is enhanced by dsDNA (double-stranded DNA) and ssDNA (single-stranded DNA). Functionally, DNA helicase that modulates androgen receptor (AR)-dependent transactivation in a promoter-dependent manner. Not able to remodel mononucleosomes in vitro. This is Helicase ARIP4 (RAD54L2) from Homo sapiens (Human).